Here is a 672-residue protein sequence, read N- to C-terminus: Beta-galactosidase bgaB (672 aa).

Substrate is bound at residue Arg-109. Cys-113 serves as a coordination point for Zn(2+). Position 147 (Asn-147) interacts with substrate. The active-site Proton donor is the Glu-148. Zn(2+) contacts are provided by Cys-156, Cys-158, and Cys-161. Glu-303 (nucleophile) is an active-site residue. Residues Trp-311 and 351 to 354 contribute to the substrate site; that span reads EKFH.

It belongs to the glycosyl hydrolase 42 family.

It catalyses the reaction Hydrolysis of terminal non-reducing beta-D-galactose residues in beta-D-galactosides.. By divalent metal ions. Fe(2+), Zn(2+), Cu(2+), Pb(2+) and Sn(2+) inhibit 52, 76.6, 85.3, 100 and 100% of the enzyme activity, respectively. Other metal cations and EDTA do not inhibit this enzyme. Thiol reagents 2-mercaptoethanol and dithiothreitol have no effect on the activity. Sulfhydryl group-blocking reagents p-chloromercuribenzoic acid and iodoacetic acid inhibit 86.2 and 74% of the enzyme activity, respectively. Hydrolyzes 6-bromo-2-naphthyl-beta-D-galactopyranoside and o-nitrophenyl-beta-D-galactopyranoside (ONPG). Possesses a high level of transgalactosylation activity. Hydrolyzes lactose in milk. The protein is Beta-galactosidase bgaB (bgaB) of Geobacillus kaustophilus.